Here is a 62-residue protein sequence, read N- to C-terminus: Flavodoxin (62 aa).

Positions 4-62 (IGIFFGTDTGKTRKIAKMIHKQLGELADAPVNINRTTLDDFMAYPVLLLGTPTLGDGQL) constitute a Flavodoxin-like domain.

Belongs to the flavodoxin family. It depends on FMN as a cofactor.

Its function is as follows. Low-potential electron donor to a number of redox enzymes. NifF is the electron donor to nitrogenase. This is Flavodoxin (nifF) from Klebsiella oxytoca.